Consider the following 550-residue polypeptide: MITQKISEELNKALAKMGIHDTQETKILVDKTKNIKFGDFYTNIAMILSKKNNKSSLEIAKEIANNFEQDLFLEVNLQPPGFLNFKLKAKDHENLLKQIYYEKDRFGQFSKKNITYNIEYVSANPTGYLHIAHAANAIYGDILANLLKIYGYDVETEYWINDAGNQIDKLAMSVLVRYLQLQNINIQLPADAYHGQEIHLVAQTLYQTYKNQFINVRLNEKYEIDDDIANQEIKNFAVKYLLNEIKNDLASINTFIDTYTSENWIRNSGRILEVLSKIKPYTYTLDGALWLKTTTFGDDKDRVLIKSDGSYTYFTPDIAYHDYKFNKTNTTKLIDVWGTDHLGYIARLKAAMNALGYDPNNLEIVCAQVMKLVKNNQEFKLSKRSGQSLTIKDLVEIIGKDALRWFLGSSSMNSHVIIDVDIALSKNNNNPLYYVQYAHARANQVLNKQVYELDFKTDLLTETRERELLNQLHFYKQTIANAANNREPHRISNYLYDLAQIFHNYYANVKINNDNNKVLSAQRYTLVWCVKQVLANGLAIMKITPYDQMY.

Residues 123-133 (ANPTGYLHIAH) carry the 'HIGH' region motif.

This sequence belongs to the class-I aminoacyl-tRNA synthetase family. In terms of assembly, monomer.

It is found in the cytoplasm. It carries out the reaction tRNA(Arg) + L-arginine + ATP = L-arginyl-tRNA(Arg) + AMP + diphosphate. This Ureaplasma parvum serovar 3 (strain ATCC 27815 / 27 / NCTC 11736) protein is Arginine--tRNA ligase.